A 460-amino-acid chain; its full sequence is Bifunctional protein GlmU (460 aa).

The segment at 1 to 229 is pyrophosphorylase; the sequence is MTNYAIILAA…FNESLGVNDR (229 aa). UDP-N-acetyl-alpha-D-glucosamine is bound by residues 8–11, lysine 22, glutamine 72, and 77–78; these read LAAG and GT. Aspartate 102 provides a ligand contact to Mg(2+). The UDP-N-acetyl-alpha-D-glucosamine site is built by glycine 139, glutamate 154, asparagine 169, and asparagine 227. Asparagine 227 is a Mg(2+) binding site. The linker stretch occupies residues 230–250; that stretch reads VALATAETVMRQRITQKHMVN. The interval 251 to 460 is N-acetyltransferase; the sequence is GVTFQNPETV…RLAHHPSRSK (210 aa). 2 residues coordinate UDP-N-acetyl-alpha-D-glucosamine: arginine 332 and lysine 350. Histidine 362 (proton acceptor) is an active-site residue. UDP-N-acetyl-alpha-D-glucosamine contacts are provided by tyrosine 365 and asparagine 376. Acetyl-CoA-binding positions include alanine 379, 385 to 386, serine 404, alanine 422, and arginine 439; that span reads NY.

The protein in the N-terminal section; belongs to the N-acetylglucosamine-1-phosphate uridyltransferase family. In the C-terminal section; belongs to the transferase hexapeptide repeat family. As to quaternary structure, homotrimer. Requires Mg(2+) as cofactor.

The protein resides in the cytoplasm. It catalyses the reaction alpha-D-glucosamine 1-phosphate + acetyl-CoA = N-acetyl-alpha-D-glucosamine 1-phosphate + CoA + H(+). It carries out the reaction N-acetyl-alpha-D-glucosamine 1-phosphate + UTP + H(+) = UDP-N-acetyl-alpha-D-glucosamine + diphosphate. The protein operates within nucleotide-sugar biosynthesis; UDP-N-acetyl-alpha-D-glucosamine biosynthesis; N-acetyl-alpha-D-glucosamine 1-phosphate from alpha-D-glucosamine 6-phosphate (route II): step 2/2. It participates in nucleotide-sugar biosynthesis; UDP-N-acetyl-alpha-D-glucosamine biosynthesis; UDP-N-acetyl-alpha-D-glucosamine from N-acetyl-alpha-D-glucosamine 1-phosphate: step 1/1. Its pathway is bacterial outer membrane biogenesis; LPS lipid A biosynthesis. In terms of biological role, catalyzes the last two sequential reactions in the de novo biosynthetic pathway for UDP-N-acetylglucosamine (UDP-GlcNAc). The C-terminal domain catalyzes the transfer of acetyl group from acetyl coenzyme A to glucosamine-1-phosphate (GlcN-1-P) to produce N-acetylglucosamine-1-phosphate (GlcNAc-1-P), which is converted into UDP-GlcNAc by the transfer of uridine 5-monophosphate (from uridine 5-triphosphate), a reaction catalyzed by the N-terminal domain. The sequence is that of Bifunctional protein GlmU from Streptococcus pyogenes serotype M5 (strain Manfredo).